The primary structure comprises 300 residues: Oxidoreductase BOA1 (300 aa).

It belongs to the NmrA-type oxidoreductase family. Isoflavone reductase subfamily.

Its pathway is polyketide biosynthesis. Its function is as follows. Oxidoreductase; part of the gene cluster A that mediates the biosynthesis of botcinic acid and its botcinin derivatives, acetate-derived polyketides that contribute to virulence when combined with the sesquiterpene botrydial. Botcinic acid and its derivatives have been shown to induce chlorosis and necrosis during host plant infection, but also have antifungal activities. Two polyketide synthases, BOA6 and BOA9, are involved in the biosynthesis of botcinins. BOA6 mediates the formation of the per-methylated tetraketide core by condensation of four units of malonyl-CoA with one unit of acetyl-CoA, which would be methylated in activated methylene groups to yield a bicyclic acid intermediate that could then either be converted to botrylactone derivatives or lose the starter acetate unit through a retro-Claisen type C-C bond cleavage to yield botcinin derivatives. The second polyketide synthase, BOA9, is probably required for the biosynthesis of the tetraketide side chain of botcinins. The methyltransferase (MT) domain within BOA6 is probably responsible for the incorporation of four methyl groups. The trans-enoyl reductase BOA5 might take over the enoyl reductase function of BOA6 that misses an ER domain. The monooxygenases BOA2, BOA3 and BOA4 might be involved in further hydroxylations at C4, C5 and C8, whereas BOA7, close to BOA9, could potentially be involved in the hydroxylation at C4 in the side chain of botcinins. The sequence is that of Oxidoreductase BOA1 from Botryotinia fuckeliana (strain B05.10) (Noble rot fungus).